Consider the following 129-residue polypeptide: Glycine cleavage system H protein (129 aa).

Residues 24 to 106 enclose the Lipoyl-binding domain; that stretch reads LLKIGVSEFA…IGEGWLVILK (83 aa). Lysine 65 carries the N6-lipoyllysine modification.

This sequence belongs to the GcvH family. As to quaternary structure, the glycine cleavage system is composed of four proteins: P, T, L and H. (R)-lipoate is required as a cofactor.

Functionally, the glycine cleavage system catalyzes the degradation of glycine. The H protein shuttles the methylamine group of glycine from the P protein to the T protein. This Prochlorococcus marinus (strain MIT 9215) protein is Glycine cleavage system H protein.